We begin with the raw amino-acid sequence, 228 residues long: Claudin-10 (228 aa).

Residues 1 to 21 (MASTASEIIAFMVSISGWVLV) traverse the membrane as a helical segment. Topologically, residues 22-80 (SSTLPTDYWKVSTIDGTVITTATYWANLWKACVTDSTGVSNCKDFPSMLALDGYIQACR) are extracellular. A helical membrane pass occupies residues 81-101 (GLMIAAVSLGFFGSIFALFGM). The Cytoplasmic portion of the chain corresponds to 102 to 115 (KCTKVGGSDKAKAK). A helical transmembrane segment spans residues 116–136 (IACLAGIVFILSGLCSMTGCS). The Extracellular portion of the chain corresponds to 137–160 (LYANKITTEFFDPLFVEQKYELGA). Residues 161–181 (ALFIGWAGASLCIIGGVIFCF) traverse the membrane as a helical segment. The Cytoplasmic portion of the chain corresponds to 182–228 (SISDNNKTPRYAYNGATSVMSSRTKYHGGEDFKTTNPSKQFDKNAYV).

It belongs to the claudin family. Can form homodimers both in trans (interaction between CLDN10 molecules in opposing membranes) and in cis (interaction between CLDN10 molecules within one membrane). Interacts with CLDN19.

Its subcellular location is the cell junction. The protein localises to the tight junction. The protein resides in the cell membrane. The enzyme catalyses Na(+)(in) = Na(+)(out). It catalyses the reaction Li(+)(in) = Li(+)(out). The catalysed reaction is K(+)(in) = K(+)(out). It carries out the reaction Rb(+)(in) = Rb(+)(out). The enzyme catalyses Cs(+)(in) = Cs(+)(out). It catalyses the reaction NH4(+)(in) = NH4(+)(out). The catalysed reaction is methylamine(out) = methylamine(in). It carries out the reaction Mg(2+)(in) = Mg(2+)(out). The enzyme catalyses Ca(2+)(in) = Ca(2+)(out). It catalyses the reaction Sr(2+)(in) = Sr(2+)(out). The catalysed reaction is chloride(in) = chloride(out). It carries out the reaction nitrate(in) = nitrate(out). Its function is as follows. Forms paracellular channels: polymerizes in tight junction strands with cation- and anion-selective channels through the strands, conveying epithelial permeability in a process known as paracellular tight junction permeability. In sweat glands and in the thick ascending limb (TAL) of Henle's loop in kidney, it controls paracellular sodium permeability which is essential for proper sweat production and renal function. In renal proximal tubules, it conveys selective chloride over hydrogencarbonate anion permeability which is required for renal chloride reabsorption and salt homeostasis. The polypeptide is Claudin-10 (CLDN10) (Pongo abelii (Sumatran orangutan)).